A 156-amino-acid chain; its full sequence is 6,7-dimethyl-8-ribityllumazine synthase (156 aa).

5-amino-6-(D-ribitylamino)uracil-binding positions include F23, A57 to E59, and T81 to I83. A (2S)-2-hydroxy-3-oxobutyl phosphate-binding site is contributed by S86–T87. H89 (proton donor) is an active-site residue. F114 lines the 5-amino-6-(D-ribitylamino)uracil pocket. R128 is a (2S)-2-hydroxy-3-oxobutyl phosphate binding site.

It belongs to the DMRL synthase family. In terms of assembly, forms an icosahedral capsid composed of 60 subunits, arranged as a dodecamer of pentamers.

It carries out the reaction (2S)-2-hydroxy-3-oxobutyl phosphate + 5-amino-6-(D-ribitylamino)uracil = 6,7-dimethyl-8-(1-D-ribityl)lumazine + phosphate + 2 H2O + H(+). The protein operates within cofactor biosynthesis; riboflavin biosynthesis; riboflavin from 2-hydroxy-3-oxobutyl phosphate and 5-amino-6-(D-ribitylamino)uracil: step 1/2. Its function is as follows. Catalyzes the formation of 6,7-dimethyl-8-ribityllumazine by condensation of 5-amino-6-(D-ribitylamino)uracil with 3,4-dihydroxy-2-butanone 4-phosphate. This is the penultimate step in the biosynthesis of riboflavin. The protein is 6,7-dimethyl-8-ribityllumazine synthase of Shouchella clausii (strain KSM-K16) (Alkalihalobacillus clausii).